Consider the following 307-residue polypeptide: MSDPLLFVLLGPTGSGKTSLSIALAERFGGEIVNCDSVAVYRELDIGTAKPTHEERESVPHHLFDVLPPTEPMTAGEYARRAREVLKDIASRGKLPIVVGGTGLYLRALLDGLFAGPERSEELREHLRRREQERGPTYLHRILSRMDRVAAAKIHPNDAAKLIRAIEVCLAARKPMTELWQQGRDPLTGFRILRIGLDPDRPALYDRINRRAAEMFEQGLVEETQALLAKYGRIGGPLDSLGYRQAFELLDGKLTREQAVAAAQQGHRNYAKRQMTWFRREPEVRWLKGFGDDAAIVGEAMQIIKTS.

11–18 (GPTGSGKT) is an ATP binding site. 13-18 (TGSGKT) is a binding site for substrate. The interaction with substrate tRNA stretch occupies residues 36–39 (DSVA).

Belongs to the IPP transferase family. As to quaternary structure, monomer. It depends on Mg(2+) as a cofactor.

It catalyses the reaction adenosine(37) in tRNA + dimethylallyl diphosphate = N(6)-dimethylallyladenosine(37) in tRNA + diphosphate. Functionally, catalyzes the transfer of a dimethylallyl group onto the adenine at position 37 in tRNAs that read codons beginning with uridine, leading to the formation of N6-(dimethylallyl)adenosine (i(6)A). The protein is tRNA dimethylallyltransferase of Koribacter versatilis (strain Ellin345).